A 526-amino-acid chain; its full sequence is Lycopene epsilon cyclase, chloroplastic (526 aa).

Residue 108–136 (LVVIGCGPAGLALAAESAKLGLNVGLVGP) participates in NAD(+) binding. The next 2 membrane-spanning stretches (helical) occupy residues 443 to 463 (FFLF…RSFF) and 477 to 497 (FLGS…MFII).

This sequence belongs to the lycopene cyclase family.

Its subcellular location is the plastid. It localises to the chloroplast membrane. The catalysed reaction is a carotenoid psi-end group = a carotenoid epsilon-end group. It functions in the pathway carotenoid biosynthesis; alpha-zeacarotene biosynthesis. The protein operates within carotenoid biosynthesis; delta-carotene biosynthesis. Catalyzes the single cyclization reaction which converts lycopene to delta-carotene and neurosporene to alpha-zeacarotene. Required for lutein biosynthesis. The sequence is that of Lycopene epsilon cyclase, chloroplastic from Solanum lycopersicum (Tomato).